We begin with the raw amino-acid sequence, 338 residues long: Egl nine homolog 1 (338 aa).

Positions 1 to 11 (PRAQPAPAQPR) are enriched in low complexity. Residues 1 to 99 (PRAQPAPAQP…PSGGLRPNGQ (99 aa)) form a disordered region. Serine 52 is subject to Phosphoserine. Cysteine 116 and cysteine 123 each carry S-nitrosocysteine. Positions 156 to 166 (VSQKSDSSKDI) are beta(2)beta(3) 'finger-like' loop. A Fe2OG dioxygenase domain is found at 209–307 (GRTKAMVACY…RYAITVWYFD (99 aa)). Cysteine 217 bears the S-nitrosocysteine mark. Residues histidine 228 and aspartate 230 each coordinate Fe cation. S-nitrosocysteine occurs at positions 238 and 241. Residue histidine 289 coordinates Fe cation. Arginine 298 is a 2-oxoglutarate binding site.

Monomer. Interacts with ING4; the interaction inhibits the hydroxylation of HIF alpha proteins. Interacts with PTGES3 (via PXLE motif); thereby recruiting EGLN1 to the HSP90 pathway to facilitate HIF alpha proteins hydroxylation. Interacts with LIMD1. Found in a complex composed of LIMD1, VHL, EGLN1/PHD2, ELOB and CUL2. Interacts with EPAS1. Interacts with CBFA2T3 and HIF1A. Fe(2+) is required as a cofactor. L-ascorbate serves as cofactor. S-nitrosylation inhibits the enzyme activity up to 60% under aerobic conditions. Chelation of Fe(2+) has no effect on the S-nitrosylation. It is uncertain whether nitrosylation occurs on Cys-238 or Cys-241. Expressed in heart, liver, kidney, brain, liver and testis. Highest levels in heart, lowest in liver.

The protein localises to the cytoplasm. It is found in the nucleus. It catalyses the reaction L-prolyl-[hypoxia-inducible factor alpha subunit] + 2-oxoglutarate + O2 = trans-4-hydroxy-L-prolyl-[hypoxia-inducible factor alpha subunit] + succinate + CO2. Its activity is regulated as follows. Increased activation in hypoxia. Hydroxylation of the C-terminal ODD domain (CODD) proline of HIF1A is activated by cyclosporin A (CsA). In terms of biological role, cellular oxygen sensor that catalyzes, under normoxic conditions, the post-translational formation of 4-hydroxyproline in hypoxia-inducible factor (HIF) alpha proteins. Hydroxylates a specific proline found in each of the oxygen-dependent degradation (ODD) domains (N-terminal, NODD, and C-terminal, CODD) of HIF1A. Also hydroxylates HIF2A. Has a preference for the CODD site for both HIF1A and HIF1B. Hydroxylated HIFs are then targeted for proteasomal degradation via the von Hippel-Lindau ubiquitination complex. Under hypoxic conditions, the hydroxylation reaction is attenuated allowing HIFs to escape degradation resulting in their translocation to the nucleus, heterodimerization with HIF1B, and increased expression of hypoxy-inducible genes. EGLN1 is the most important isozyme under normoxia and, through regulating the stability of HIF1, involved in various hypoxia-influenced processes such as angiogenesis in retinal and cardiac functionality. Target proteins are preferentially recognized via a LXXLAP motif. This is Egl nine homolog 1 (Egln1) from Rattus norvegicus (Rat).